A 139-amino-acid chain; its full sequence is Nucleoside diphosphate kinase (139 aa).

6 residues coordinate ATP: K11, F59, R87, T93, R104, and N114. The active-site Pros-phosphohistidine intermediate is the H117.

Belongs to the NDK family. As to quaternary structure, homotetramer. Mg(2+) is required as a cofactor.

It is found in the cytoplasm. The catalysed reaction is a 2'-deoxyribonucleoside 5'-diphosphate + ATP = a 2'-deoxyribonucleoside 5'-triphosphate + ADP. It catalyses the reaction a ribonucleoside 5'-diphosphate + ATP = a ribonucleoside 5'-triphosphate + ADP. Its function is as follows. Major role in the synthesis of nucleoside triphosphates other than ATP. The ATP gamma phosphate is transferred to the NDP beta phosphate via a ping-pong mechanism, using a phosphorylated active-site intermediate. This is Nucleoside diphosphate kinase from Coxiella burnetii (strain CbuK_Q154) (Coxiella burnetii (strain Q154)).